A 272-amino-acid polypeptide reads, in one-letter code: Ribosomal RNA small subunit methyltransferase A (272 aa).

The S-adenosyl-L-methionine site is built by Asn-18, Leu-20, Gly-45, Glu-66, Asp-91, and Asn-113.

Belongs to the class I-like SAM-binding methyltransferase superfamily. rRNA adenine N(6)-methyltransferase family. RsmA subfamily.

It localises to the cytoplasm. It catalyses the reaction adenosine(1518)/adenosine(1519) in 16S rRNA + 4 S-adenosyl-L-methionine = N(6)-dimethyladenosine(1518)/N(6)-dimethyladenosine(1519) in 16S rRNA + 4 S-adenosyl-L-homocysteine + 4 H(+). Its function is as follows. Specifically dimethylates two adjacent adenosines (A1518 and A1519) in the loop of a conserved hairpin near the 3'-end of 16S rRNA in the 30S particle. May play a critical role in biogenesis of 30S subunits. The sequence is that of Ribosomal RNA small subunit methyltransferase A from Serratia proteamaculans (strain 568).